The chain runs to 126 residues: Holo-[acyl-carrier-protein] synthase (126 aa).

Positions 8 and 57 each coordinate Mg(2+).

This sequence belongs to the P-Pant transferase superfamily. AcpS family. It depends on Mg(2+) as a cofactor.

It localises to the cytoplasm. It carries out the reaction apo-[ACP] + CoA = holo-[ACP] + adenosine 3',5'-bisphosphate + H(+). Its function is as follows. Transfers the 4'-phosphopantetheine moiety from coenzyme A to a Ser of acyl-carrier-protein. The polypeptide is Holo-[acyl-carrier-protein] synthase (Trichlorobacter lovleyi (strain ATCC BAA-1151 / DSM 17278 / SZ) (Geobacter lovleyi)).